The primary structure comprises 431 residues: Enolase (431 aa).

Residue Q167 participates in (2R)-2-phosphoglycerate binding. E209 acts as the Proton donor in catalysis. Residues D246, E290, and D317 each coordinate Mg(2+). Residues K342, R371, S372, and K393 each coordinate (2R)-2-phosphoglycerate. K342 functions as the Proton acceptor in the catalytic mechanism.

Belongs to the enolase family. In terms of assembly, component of the RNA degradosome, a multiprotein complex involved in RNA processing and mRNA degradation. Mg(2+) is required as a cofactor.

It is found in the cytoplasm. Its subcellular location is the secreted. It localises to the cell surface. It catalyses the reaction (2R)-2-phosphoglycerate = phosphoenolpyruvate + H2O. Its pathway is carbohydrate degradation; glycolysis; pyruvate from D-glyceraldehyde 3-phosphate: step 4/5. Catalyzes the reversible conversion of 2-phosphoglycerate (2-PG) into phosphoenolpyruvate (PEP). It is essential for the degradation of carbohydrates via glycolysis. This is Enolase from Yersinia enterocolitica serotype O:8 / biotype 1B (strain NCTC 13174 / 8081).